The following is a 367-amino-acid chain: MKIDKTLVVKFGTSTLTQGSAKLNLPHMMDIVRQLAQLHQAGFRLVIVTSGAIAAGRHYLNHPQLPPTIASKQLLAAVGQSQLIQTWEKLFAIYDIHIGQILLTRADIEDRERFLNARDTLRALLDNQIIPVINENDAVATSEIKVGDNDNLSALVAILVQAEQLYLLTDQQGLFDRDPRKHPDAKLIADVDKITDHIRAIAGGSGTSLGTGGMSTKISAADVATRSGIETIIAPGNRPNVIVDLAYGQAIGTKFSVQADRLESRKQWLYAAPSAGIITIDAGAENAMLMQHKSLLPAGIVNVEGRFSRGEVVKIRTQQGKDVALGMPRYNSDALHLIQGKHSQDIEQVLGYEYGAVAVHRDDMIVL.

Lys10 is an ATP binding site. Positions 50, 137, and 149 each coordinate substrate. Residues Thr169–Asp170 and Thr211–Lys217 each bind ATP. The region spanning Ala275–Glu353 is the PUA domain.

It belongs to the glutamate 5-kinase family.

The protein resides in the cytoplasm. The enzyme catalyses L-glutamate + ATP = L-glutamyl 5-phosphate + ADP. Its pathway is amino-acid biosynthesis; L-proline biosynthesis; L-glutamate 5-semialdehyde from L-glutamate: step 1/2. Functionally, catalyzes the transfer of a phosphate group to glutamate to form L-glutamate 5-phosphate. The chain is Glutamate 5-kinase from Pasteurella multocida (strain Pm70).